A 560-amino-acid polypeptide reads, in one-letter code: Mannosyl-oligosaccharide 1,2-alpha-mannosidase MNS1 (560 aa).

Residues M1 to R27 are Cytoplasmic-facing. The helical; Signal-anchor for type II membrane protein transmembrane segment at L28–N47 threads the bilayer. Residues N47–K80 are a coiled coil. Over L48–V560 the chain is Lumenal. The active-site Proton donor is E179. D312 is a catalytic residue. A glycan (N-linked (GlcNAc...) asparagine) is linked at N326. C377 and C409 are oxidised to a cystine. E423 acts as the Proton donor in catalysis. E445 is an active-site residue. The N-linked (GlcNAc...) asparagine glycan is linked to N459. T529 is a binding site for Ca(2+).

This sequence belongs to the glycosyl hydrolase 47 family. Ca(2+) is required as a cofactor. Mn(2+) serves as cofactor. It depends on Mg(2+) as a cofactor. Expressed in flowers, siliques, stems, leaves, roots, pollen grains, shoot apical meristems, hypocotyls and upper region of the root.

Its subcellular location is the golgi apparatus membrane. The catalysed reaction is N(4)-(alpha-D-Man-(1-&gt;2)-alpha-D-Man-(1-&gt;2)-alpha-D-Man-(1-&gt;3)-[alpha-D-Man-(1-&gt;2)-alpha-D-Man-(1-&gt;3)-[alpha-D-Man-(1-&gt;2)-alpha-D-Man-(1-&gt;6)]-alpha-D-Man-(1-&gt;6)]-beta-D-Man-(1-&gt;4)-beta-D-GlcNAc-(1-&gt;4)-beta-D-GlcNAc)-L-asparaginyl-[protein] (N-glucan mannose isomer 9A1,2,3B1,2,3) + 4 H2O = N(4)-(alpha-D-Man-(1-&gt;3)-[alpha-D-Man-(1-&gt;3)-[alpha-D-Man-(1-&gt;6)]-alpha-D-Man-(1-&gt;6)]-beta-D-Man-(1-&gt;4)-beta-D-GlcNAc-(1-&gt;4)-beta-D-GlcNAc)-L-asparaginyl-[protein] (N-glucan mannose isomer 5A1,2) + 4 beta-D-mannose. It carries out the reaction N(4)-(alpha-D-Man-(1-&gt;2)-alpha-D-Man-(1-&gt;2)-alpha-D-Man-(1-&gt;3)-[alpha-D-Man-(1-&gt;3)-[alpha-D-Man-(1-&gt;2)-alpha-D-Man-(1-&gt;6)]-alpha-D-Man-(1-&gt;6)]-beta-D-Man-(1-&gt;4)-beta-D-GlcNAc-(1-&gt;4)-beta-D-GlcNAc)-L-asparaginyl-[protein] (N-glucan mannose isomer 8A1,2,3B1,3) + 3 H2O = N(4)-(alpha-D-Man-(1-&gt;3)-[alpha-D-Man-(1-&gt;3)-[alpha-D-Man-(1-&gt;6)]-alpha-D-Man-(1-&gt;6)]-beta-D-Man-(1-&gt;4)-beta-D-GlcNAc-(1-&gt;4)-beta-D-GlcNAc)-L-asparaginyl-[protein] (N-glucan mannose isomer 5A1,2) + 3 beta-D-mannose. The enzyme catalyses N(4)-(alpha-D-Man-(1-&gt;2)-alpha-D-Man-(1-&gt;2)-alpha-D-Man-(1-&gt;3)-[alpha-D-Man-(1-&gt;2)-alpha-D-Man-(1-&gt;3)-[alpha-D-Man-(1-&gt;2)-alpha-D-Man-(1-&gt;6)]-alpha-D-Man-(1-&gt;6)]-beta-D-Man-(1-&gt;4)-beta-D-GlcNAc-(1-&gt;4)-beta-D-GlcNAc)-L-asparaginyl-[protein] (N-glucan mannose isomer 9A1,2,3B1,2,3) + H2O = N(4)-(alpha-D-Man-(1-&gt;2)-alpha-D-Man-(1-&gt;2)-alpha-D-Man-(1-&gt;3)-[alpha-D-Man-(1-&gt;3)-[alpha-D-Man-(1-&gt;2)-alpha-D-Man-(1-&gt;6)]-alpha-D-Man-(1-&gt;6)]-beta-D-Man-(1-&gt;4)-beta-D-GlcNAc-(1-&gt;4)-beta-D-GlcNAc)-L-asparaginyl-[protein] (N-glucan mannose isomer 8A1,2,3B1,3) + beta-D-mannose. It participates in protein modification; protein glycosylation. Inhibited by kifunensine and 1-deoxymannojirimycin, but not by swainsonine. Its function is as follows. Class I alpha-mannosidase essential for early N-glycan processing. Progressively trims alpha-1,2-linked mannose residues. Produces Man(5)GlcNAc(2) from Man(8)GlcNAc(2), but only Man(6)GlcNAc(2) from Man(9)GlcNAc(2). Has difficulty acting on the terminal mannose of the b-branch. Involved in root development and cell wall biosynthesis. The chain is Mannosyl-oligosaccharide 1,2-alpha-mannosidase MNS1 (MNS1) from Arabidopsis thaliana (Mouse-ear cress).